We begin with the raw amino-acid sequence, 691 residues long: UvrABC system protein C (691 aa).

The 78-residue stretch at 20–97 (STSGVYLWKD…IKKHTPRYNI (78 aa)) folds into the GIY-YIG domain. A UVR domain is found at 204–239 (DATVARLEKRMKRAVRQEAFEAAARIRDDIQAIRCI). A disordered region spans residues 662-691 (RSTTAPVREEYKEHEHDPQGESPGPGRKTD). Positions 668–680 (VREEYKEHEHDPQ) are enriched in basic and acidic residues.

It belongs to the UvrC family. In terms of assembly, interacts with UvrB in an incision complex.

It is found in the cytoplasm. In terms of biological role, the UvrABC repair system catalyzes the recognition and processing of DNA lesions. UvrC both incises the 5' and 3' sides of the lesion. The N-terminal half is responsible for the 3' incision and the C-terminal half is responsible for the 5' incision. This is UvrABC system protein C from Treponema pallidum (strain Nichols).